Consider the following 300-residue polypeptide: Cholesterol 25-hydroxylase-like protein (300 aa).

Asparagine 9 carries an N-linked (GlcNAc...) asparagine glycan. Transmembrane regions (helical) follow at residues tyrosine 54 to phenylalanine 73, leucine 95 to valine 115, and methionine 130 to asparagine 152. One can recognise a Fatty acid hydroxylase domain in the interval alanine 135–glycine 266. Residues phenylalanine 148–asparagine 152 carry the Histidine box-1 motif. Positions histidine 163 to histidine 167 match the Histidine box-2 motif. The helical transmembrane segment at isoleucine 192–isoleucine 212 threads the bilayer. Positions alanine 242 to leucine 248 match the Histidine box-3 motif.

This sequence belongs to the sterol desaturase family. Fe cation is required as a cofactor.

The protein localises to the membrane. Its function is as follows. Probable sterol desaturase. The sequence is that of Cholesterol 25-hydroxylase-like protein from Caenorhabditis elegans.